A 312-amino-acid polypeptide reads, in one-letter code: MNHIFKHIPVMKKELIDSLKIKKNGIYIDSTFGTGGHSNEILKKLGQSGRLYSIDRDPIAFSIGSKIKDSRFHIINENFSKLLDFAKNEKIIGKVNGIIFDLGVSSIQIDDYRRGFSFKNDGPLDMRMNPNYGISASEWLFESNVKEISFVLKNFGEERFSRKIAYAIKRRSQIKKITSTLELANIIKKTIPTKNKFKHPARRSFQAIRIYINQELEEIHKALESTLKILKPGGRISIISFHSLEDRLVKKFMIKNSTKAIIPYGMPITEEQLNRLTTCKLKIINRILPTQNEINNNPRARSSVLRIAEIQE.

S-adenosyl-L-methionine is bound by residues 35–37, Asp55, Phe85, Asp101, and Gln108; that span reads GGH.

The protein belongs to the methyltransferase superfamily. RsmH family.

The protein localises to the cytoplasm. It carries out the reaction cytidine(1402) in 16S rRNA + S-adenosyl-L-methionine = N(4)-methylcytidine(1402) in 16S rRNA + S-adenosyl-L-homocysteine + H(+). Specifically methylates the N4 position of cytidine in position 1402 (C1402) of 16S rRNA. The chain is Ribosomal RNA small subunit methyltransferase H from Buchnera aphidicola subsp. Acyrthosiphon pisum (strain Tuc7).